Reading from the N-terminus, the 165-residue chain is Nucleotide-binding protein TGRD_519 (165 aa).

The protein belongs to the YajQ family.

Functionally, nucleotide-binding protein. The chain is Nucleotide-binding protein TGRD_519 from Endomicrobium trichonymphae.